The primary structure comprises 83 residues: Exodeoxyribonuclease 7 small subunit (83 aa).

Residues 1-25 are disordered; it reads MQDELFETEKAPPKNAKNAPKKSFE.

The protein belongs to the XseB family. In terms of assembly, heterooligomer composed of large and small subunits.

The protein resides in the cytoplasm. The enzyme catalyses Exonucleolytic cleavage in either 5'- to 3'- or 3'- to 5'-direction to yield nucleoside 5'-phosphates.. Functionally, bidirectionally degrades single-stranded DNA into large acid-insoluble oligonucleotides, which are then degraded further into small acid-soluble oligonucleotides. In Helicobacter pylori (strain P12), this protein is Exodeoxyribonuclease 7 small subunit.